The following is a 189-amino-acid chain: Large ribosomal subunit protein uL10 (189 aa).

This sequence belongs to the universal ribosomal protein uL10 family. In terms of assembly, part of the ribosomal stalk of the 50S ribosomal subunit. The N-terminus interacts with L11 and the large rRNA to form the base of the stalk. The C-terminus forms an elongated spine to which L12 dimers bind in a sequential fashion forming a multimeric L10(L12)X complex.

Functionally, forms part of the ribosomal stalk, playing a central role in the interaction of the ribosome with GTP-bound translation factors. This chain is Large ribosomal subunit protein uL10, found in Rippkaea orientalis (strain PCC 8801 / RF-1) (Cyanothece sp. (strain PCC 8801)).